An 8799-amino-acid chain; its full sequence is Nesprin-1 (8799 aa).

Residues 1–289 are actin-binding; that stretch reads MATSRASSRS…TQYPDIHGAG (289 aa). Residues 1-8748 lie on the Cytoplasmic side of the membrane; sequence MATSRASSRS…GRAFLFRILR (8748 aa). Calponin-homology (CH) domains lie at 27 to 134 and 178 to 283; these read IVQK…LYFQ and GNAK…TQYP. Spectrin repeat units lie at residues 314–397, 398–502, 503–609, 610–703, 704–815, 816–923, 924–1024, 1025–1122, 1123–1246, 1247–1333, 1334–1442, 1443–1548, 1549–1651, 1652–1761, 1762–1877, 1878–1974, 1975–2079, 2080–2193, 2194–2301, 2302–2399, 2400–2511, 2512–2617, 2618–2729, 2730–2836, 2837–2960, 2961–3060, 3061–3169, 3170–3273, 3274–3385, 3386–3488, 3489–3591, 3592–3718, 3719–3812, 3813–3918, 3919–4026, 4027–4137, 4138–4233, 4234–4337, 4338–4449, 4450–4558, 4559–4667, 4668–4774, 4775–4880, 4881–4989, 4990–5097, 5098–5207, 5208–5316, 5317–5422, 5423–5520, 5521–5628, 5629–5745, and 5746–5851; these read RDDR…SRLF, DWHI…HLMK, MEFL…SMLE, EVIS…YARA, DEMD…QLTV, PLEE…KHVE, ANSR…HLKI, AVEK…LVDD, PDKW…SSLE, GLIS…ERRI, QVSL…MEMV, KSKW…ILGH, LSQQ…LEDL, LARW…LQSV, LAEH…SHAC, MSTL…ADAL, VALK…QGQC, CGLI…LRVS, LSIW…KDFT, AQRT…QTQA, RIQD…LQDC, VSEL…LRSC, QLAL…LESV, IDQW…VEDL, VKDH…FGQV, TQLE…QNKE, QILQ…LENL, KIQM…VSRL, DRII…LEGA, LSKW…LEKL, VRLH…RMQL, NNVV…YSDW, YGST…LEKG, LHLA…LEAK, VKDH…QRVY, RSLE…KSLK, AELW…REQD, LQRT…IQVS, VTNL…LNKA, LSEK…LEKS, LVSR…TQEA, ILAR…LEDT, TSVY…CESR, MVQS…LTEI, YSRC…LQRC, MVQW…LEDA, VDEW…GKLV, KQEL…EEGK, AMSQ…LSKL, NQAL…LQDA, AKDM…PKEA, and VVQY…PSAH. The stretch at 314–8666 forms a coiled coil; that stretch reads RDDRLILKET…DLEKLLDMSS (8353 aa). Position 377 is a phosphoserine (lysine 377). The residue at position 732 (serine 732) is a Phosphoserine. The interval 1288–1310 is disordered; the sequence is KKRDLQEQMEQAQQGGQAGPGQE. Threonine 2268 carries the phosphothreonine modification. A Phosphoserine modification is found at serine 5655. The disordered stretch occupies residues 5868-5894; sequence PVTEESGEEGTNSEISSPPACRSPSPV. Spectrin repeat units follow at residues 5971–6080, 6081–6187, 6377–6488, 6489–6584, 6585–6694, 6695–6798, 6799–6905, 6906–7023, 7024–7131, 7132–7240, 7241–7353, 7354–7457, 7458–7561, 7562–7674, 7675–7786, 7787–7886, 7887–8000, 8001–8109, and 8110–8221; these read LERQ…LEEK, LSDQ…SLGE, RQSI…RLQQ, ILRF…RSSL, HQNL…LEMW, SHLD…TILK, HWTR…QEKL, HQLQ…LEGL, LESW…LTSA, LGQW…SKAL, LQLW…LQAG, VVDY…LQSF, LLQH…RGII, DSQI…LAFL, LKDW…NEWA, VFSE…LKET, LVAV…IEET, WRLW…LKHF, and ISQR…VRLP. Aspartate 8225 and serine 8227 each carry phosphoserine. The tract at residues 8237 to 8287 is disordered; the sequence is TALSDLRWQDPSADGMPSPQPSSNPSLSLPQPLRSERSGRDTPASVDSIPL. Over residues 8257–8269 the composition is skewed to low complexity; it reads PSSNPSLSLPQPL. Threonine 8278 is subject to Phosphothreonine. Serine 8281, serine 8284, and serine 8308 each carry phosphoserine. Spectrin repeat units follow at residues 8332 to 8440, 8441 to 8550, and 8551 to 8668; these read SSLE…MKQN, LQKW…LQDA, and LMQC…SSSQ. Threonine 8363 carries the post-translational modification Phosphothreonine. A disordered region spans residues 8673–8735; the sequence is SWSSADELDT…SDSSRSDPRP (63 aa). Composition is skewed to polar residues over residues 8682–8698 and 8706–8718; these read TSGS…PNRQ and SLSQ…SSPK. Positions 8721–8735 are enriched in basic and acidic residues; that stretch reads STRDGSDSSRSDPRP. Residues 8740-8799 form the KASH domain; that stretch reads RAFLFRILRAALPFQLLLLLLIGLTCLVPMSEKDYSCALSNNFARSFHPMLRYTNGPPPL. Residues 8749–8769 form a helical; Anchor for type IV membrane protein membrane-spanning segment; that stretch reads AALPFQLLLLLLIGLTCLVPM. Residues 8770–8799 are Perinuclear space-facing; that stretch reads SEKDYSCALSNNFARSFHPMLRYTNGPPPL.

It belongs to the nesprin family. In terms of assembly, core component of LINC complexes which are composed of inner nuclear membrane SUN domain-containing proteins coupled to outer nuclear membrane KASH domain-containing nesprins. SUN and KASH domain-containing proteins seem to bind each other promiscuously; however, differentially expression of LINC complex constituents can give rise to specific assemblies. At least SUN1/2-containing core LINC complexes are proposed to be hexameric composed of three protomers of each KASH and SUN domain-containing protein. The SUN2:SYNE1/KASH1 LINC complex is a heterohexamer; the homotrimeric cloverleave-like conformation of the SUN domain is a prerequisite for LINC complex formation in which three separate SYNE1/KASH1 peptides bind at the interface of adjacent SUN domains. Self-associates. Interacts with SYNE3. Interacts with SUN3; proposed to form a spermatogenesis-specific LINC complex with SUN3 during sperm head formation. May interact with MUSK. Interacts with SPAG4/SUN4. Interacts with EMD and LMNA in vitro. Interacts with F-actin via its N-terminal domain. Interacts with DCTN1 and DYNC1I1/2; suggesting the association with the dynein-dynactin motor complex. Interacts (via KASH domain) with TMEM258. In terms of processing, the disulfid bond with SUN1 or SUN2 is required for stability of the respective LINC complex under tensile forces. In terms of tissue distribution, expressed in C2F3 and CH310T1/2 cells, brain and skeletal muscle (at protein level).

The protein resides in the nucleus outer membrane. The protein localises to the nucleus. It is found in the nucleus envelope. It localises to the cytoplasm. Its subcellular location is the cytoskeleton. The protein resides in the myofibril. The protein localises to the sarcomere. Multi-isomeric modular protein which forms a linking network between organelles and the actin cytoskeleton to maintain the subcellular spatial organization. As a component of the LINC (LInker of Nucleoskeleton and Cytoskeleton) complex involved in the connection between the nuclear lamina and the cytoskeleton. The nucleocytoplasmic interactions established by the LINC complex play an important role in the transmission of mechanical forces across the nuclear envelope and in nuclear movement and positioning. May be involved in nucleus-centrosome attachment. During interkinetic nuclear migration (INM) at G2 phase and nuclear migration in neural progenitors its LINC complex association with SUN1/2 and probably association with cytoplasmic dynein-dynactin motor complexes functions to pull the nucleus toward the centrosome; SYNE1 and SYNE2 seem to act redundantly in cerebellum, midbrain, brain stem, and other brain regions except cerebral cortex and hippocampus. Required for centrosome migration to the apical cell surface during early ciliogenesis. May be involved in nuclear remodeling during sperm head formation in spermatogenesis; a probable SUN3:SYNE1/KASH1 LINC complex may tether spermatid nuclei to posterior cytoskeletal structures such as the manchette. The protein is Nesprin-1 of Mus musculus (Mouse).